The sequence spans 313 residues: MDQGFRQWLTTVFRDRVKWDEPMSRHTTLGVGGPADALVAPETVSELRELIGRCRAQNIAFMVLAGGSNLLVRDRGIRGIVIDMKKYWQTIERHSDRGSGARLTVGAGLTLAALCRYAADNGLAGMTFAVGIPGTVGGAVAMNAGTAEGWMGDVVEAVEMVTGDGRRIRKEKQDLVFSYRRFAVRNDDTATPGPPVITGVDLGLGFDDSEALKAAAEERRRRRTATQPAGFRSAGCFFKNPEAGDPAGKLIDRAGLKGLAVGGAVVSEAHGNFLVNRGNATAGDLLALMETVQRRVADRFGVTLEPEVTIVGQ.

The FAD-binding PCMH-type domain maps to 31 to 207 (VGGPADALVA…TGVDLGLGFD (177 aa)). R180 is a catalytic residue. Residue C236 is the Proton donor of the active site. Residue E307 is part of the active site.

Belongs to the MurB family. Requires FAD as cofactor.

It is found in the cytoplasm. It carries out the reaction UDP-N-acetyl-alpha-D-muramate + NADP(+) = UDP-N-acetyl-3-O-(1-carboxyvinyl)-alpha-D-glucosamine + NADPH + H(+). It participates in cell wall biogenesis; peptidoglycan biosynthesis. Its function is as follows. Cell wall formation. The sequence is that of UDP-N-acetylenolpyruvoylglucosamine reductase from Desulfosudis oleivorans (strain DSM 6200 / JCM 39069 / Hxd3) (Desulfococcus oleovorans).